Reading from the N-terminus, the 198-residue chain is COMM domain-containing protein 9 (198 aa).

The residue at position 2 (A2) is an N-acetylalanine. One can recognise a COMM domain in the interval 122–196 (RLVDLDWRVD…RIRDQLSAVA (75 aa)).

Belongs to the COMM domain-containing protein 9 family. In terms of assembly, component of the commander complex consisting of the CCC subcomplex and the retriever subcomplex. Component of the CCC (COMMD/CCDC22/CCDC93) subcomplex consisting of COMMD1, COMMD2, COMMD3, COMMD4, COMMD5, COMMD6, COMMD7, COMMD8, COMMD9, COMMD10, CCDC22 and CCDC93; within the complex forms a heterodimer with COMMD7. Interacts with RELB and NFKB1/p105. Interacts with CCDC22, CCDC93, SCNN1B, CUL1. In terms of tissue distribution, ubiquitous.

Its subcellular location is the nucleus. The protein resides in the cytoplasmic vesicle. Scaffold protein in the commander complex that is essential for endosomal recycling of transmembrane cargos; the commander complex is composed of the CCC subcomplex and the retriever subcomplex. May modulate activity of cullin-RING E3 ubiquitin ligase (CRL) complexes. May down-regulate activation of NF-kappa-B. Modulates Na(+) transport in epithelial cells by regulation of apical cell surface expression of amiloride-sensitive sodium channel (ENaC) subunits. The sequence is that of COMM domain-containing protein 9 (COMMD9) from Homo sapiens (Human).